The primary structure comprises 872 residues: DNA mismatch repair protein MutS (872 aa).

Residue 626 to 633 (GPNMAGKS) participates in ATP binding.

It belongs to the DNA mismatch repair MutS family.

Functionally, this protein is involved in the repair of mismatches in DNA. It is possible that it carries out the mismatch recognition step. This protein has a weak ATPase activity. This Chlorobium phaeobacteroides (strain DSM 266 / SMG 266 / 2430) protein is DNA mismatch repair protein MutS.